The sequence spans 380 residues: MTPMRKTNPLAKLINHSFIDLPTPSNISTWWNFGSLLGACLILQITTGLFLAMHYSPDASTAFSSIAHITRDVNYGWTIRYLHANGASMFFICLFLHIGRGLYYGSFLHQETWNIGIILLLTTMAAAFMGYVLPWGQMSFWGATVITNLLSAIPYIGTDLVQWVWGGYSVDSPTLTRFFTFHFILPFIITALTTLHLLFLHETGSNNPLGIPSHSDKITFHPYYTIKDILGLFLFLLTLMTLTLFSPDLLGDPDNYTLANPLSTPPHIKPEWYFLFAYAILRSVPNKLGGVLALLLSILILAMIPILHMSKQQSMMFRPLSQLLYWFLIADLFTLTWIGGQPVSYPFITIGQVASVLYFTTILFLMPITSLIENKMLKWT.

4 helical membrane passes run 33 to 53 (FGSL…FLAM), 77 to 98 (WTIR…FLHI), 113 to 133 (WNIG…GYVL), and 178 to 198 (FFTF…LHLL). The heme b site is built by H83 and H97. Heme b-binding residues include H182 and H196. Position 201 (H201) interacts with a ubiquinone. 4 helical membrane passes run 226–246 (IKDI…TLFS), 288–308 (LGGV…PILH), 320–340 (LSQL…WIGG), and 347–367 (FITI…FLMP).

The protein belongs to the cytochrome b family. The cytochrome bc1 complex contains 11 subunits: 3 respiratory subunits (MT-CYB, CYC1 and UQCRFS1), 2 core proteins (UQCRC1 and UQCRC2) and 6 low-molecular weight proteins (UQCRH/QCR6, UQCRB/QCR7, UQCRQ/QCR8, UQCR10/QCR9, UQCR11/QCR10 and a cleavage product of UQCRFS1). This cytochrome bc1 complex then forms a dimer. Heme b serves as cofactor.

It localises to the mitochondrion inner membrane. Its function is as follows. Component of the ubiquinol-cytochrome c reductase complex (complex III or cytochrome b-c1 complex) that is part of the mitochondrial respiratory chain. The b-c1 complex mediates electron transfer from ubiquinol to cytochrome c. Contributes to the generation of a proton gradient across the mitochondrial membrane that is then used for ATP synthesis. In Gorilla gorilla gorilla (Western lowland gorilla), this protein is Cytochrome b (MT-CYB).